A 224-amino-acid polypeptide reads, in one-letter code: Ribonuclease 3 (224 aa).

An RNase III domain is found at 5 to 127 (LERLCRRLNY…ILAAIYLDGG (123 aa)). E40 is a Mg(2+) binding site. The active site involves D44. Residues D113 and E116 each coordinate Mg(2+). Residue E116 is part of the active site. Positions 154-224 (DAKTQLQEFL…AKAMLEQLQG (71 aa)) constitute a DRBM domain.

It belongs to the ribonuclease III family. As to quaternary structure, homodimer. Requires Mg(2+) as cofactor.

The protein localises to the cytoplasm. The catalysed reaction is Endonucleolytic cleavage to 5'-phosphomonoester.. Digests double-stranded RNA. Involved in the processing of primary rRNA transcript to yield the immediate precursors to the large and small rRNAs (23S and 16S). Processes some mRNAs, and tRNAs when they are encoded in the rRNA operon. Processes pre-crRNA and tracrRNA of type II CRISPR loci if present in the organism. The chain is Ribonuclease 3 from Legionella pneumophila subsp. pneumophila (strain Philadelphia 1 / ATCC 33152 / DSM 7513).